Consider the following 379-residue polypeptide: Cobalt-precorrin-5B C(1)-methyltransferase (379 aa).

It belongs to the CbiD family.

It carries out the reaction Co-precorrin-5B + S-adenosyl-L-methionine = Co-precorrin-6A + S-adenosyl-L-homocysteine. It functions in the pathway cofactor biosynthesis; adenosylcobalamin biosynthesis; cob(II)yrinate a,c-diamide from sirohydrochlorin (anaerobic route): step 6/10. Functionally, catalyzes the methylation of C-1 in cobalt-precorrin-5B to form cobalt-precorrin-6A. This chain is Cobalt-precorrin-5B C(1)-methyltransferase, found in Citrobacter koseri (strain ATCC BAA-895 / CDC 4225-83 / SGSC4696).